The sequence spans 266 residues: Pre-mRNA-splicing factor CWC26 (266 aa).

Disordered stretches follow at residues 1-37 and 118-149; these read MALH…DKTS and TRKT…KYED. Residues 16 to 26 show a composition bias toward basic residues; that stretch reads PKNKTKKKKKE. Basic and acidic residues predominate over residues 122-149; sequence IYRDAQGHKIQEDSKIDDSSFSRSKYED.

This sequence belongs to the CWC26 family. In terms of assembly, belongs to the pre-mRNA retention and splicing (RES) complex composed of at least BUD13, IST3 and PML1. May also belong to the CWC complex (or CEF1-associated complex) composed of the U2, U5 and U6 snRNAs and at least BUD13, BUD31, BRR2, CDC40, CEF1, CLF1, CUS1, CWC2, CWC15, CWC21, CWC22, CWC23, CWC24, CWC25, CWC27, ECM2, HSH155, IST3, ISY1, LEA1, MSL1, NTC20, PRP8, PRP9, PRP11, PRP19, PRP21, PRP22, PRP45, PRP46, SLU7, SMB1, SMD1, SMD2, SMD3, SMX2, SMX3, SNT309, SNU114, SPP2, SYF1, SYF2, RSE1 and YJU2. Interacts with IST3 and PML1.

The protein resides in the cytoplasm. It is found in the nucleus. Its function is as follows. Required for efficient splicing and pre-mRNA nuclear retention. May also be involved in positioning the proximal bud pole signal. The sequence is that of Pre-mRNA-splicing factor CWC26 (BUD13) from Saccharomyces cerevisiae (strain ATCC 204508 / S288c) (Baker's yeast).